Consider the following 230-residue polypeptide: Small ribosomal subunit protein uS7B (230 aa).

Residues 1 to 22 (MSEEVVESSSQEASQVIPQEQE) form a disordered region. Positions 7–16 (ESSSQEASQV) are enriched in low complexity.

This sequence belongs to the universal ribosomal protein uS7 family.

In Drosophila melanogaster (Fruit fly), this protein is Small ribosomal subunit protein uS7B (RpS5b).